Here is a 214-residue protein sequence, read N- to C-terminus: Ribonuclease T (214 aa).

Positions 20-195 (VVVDVETAGF…YDTQKTAELF (176 aa)) constitute an Exonuclease domain. Mg(2+) is bound by residues D23, E25, H182, and D187. Residue H182 is the Proton donor/acceptor of the active site.

Belongs to the RNase T family. In terms of assembly, homodimer. Requires Mg(2+) as cofactor.

Trims short 3' overhangs of a variety of RNA species, leaving a one or two nucleotide 3' overhang. Responsible for the end-turnover of tRNA: specifically removes the terminal AMP residue from uncharged tRNA (tRNA-C-C-A). Also appears to be involved in tRNA biosynthesis. This chain is Ribonuclease T, found in Vibrio parahaemolyticus serotype O3:K6 (strain RIMD 2210633).